The chain runs to 103 residues: OMEGA-ectatommitoxin(02)-Rm1d (103 aa).

The signal sequence occupies residues 1 to 30 (MKDSYISIVIAYLMVTFILVSSMPIEGEKR). Disulfide bonds link C39–C54, C49–C70, and C72–C81. An EGF-like domain is found at 43–82 (LNDENYCFNGKCVHLVAQDEPGKPYYSCICDEFYIGERCG).

The protein belongs to the EGF domain peptide family. Expressed by the venom gland.

Its subcellular location is the secreted. Its function is as follows. Ant peptide with probable defensive activity which acts as a potent agonist of the mammalian epidermal growth factor receptor (EGFR). Mimics, both structurally and functionally, vertebrate epidermal growth factor (EGF) peptide hormones. In vivo, intraplantar injection in mice causes long-lasting (several days) hypersensitivity of the injected paw to both mechanical and thermal stimuli. Its long-lasting effect is unusual for venom toxins whose effects are usually immediate. One possible explanation is that it would reduce the duration of a nest attack, discourage future attacks, or enhance the actions of subsequent exposure to other pain-inducing venom peptides. This Rhytidoponera metallica (Australian green-headed ant) protein is OMEGA-ectatommitoxin(02)-Rm1d.